Consider the following 608-residue polypeptide: Elongation factor 4 (608 aa).

The 183-residue stretch at 11-193 (KKIRNFSIIA…QIVEKVPEPS (183 aa)) folds into the tr-type G domain. Residues 23–28 (DHGKST) and 140–143 (NKID) each bind GTP.

This sequence belongs to the TRAFAC class translation factor GTPase superfamily. Classic translation factor GTPase family. LepA subfamily.

The protein localises to the cell membrane. The enzyme catalyses GTP + H2O = GDP + phosphate + H(+). Its function is as follows. Required for accurate and efficient protein synthesis under certain stress conditions. May act as a fidelity factor of the translation reaction, by catalyzing a one-codon backward translocation of tRNAs on improperly translocated ribosomes. Back-translocation proceeds from a post-translocation (POST) complex to a pre-translocation (PRE) complex, thus giving elongation factor G a second chance to translocate the tRNAs correctly. Binds to ribosomes in a GTP-dependent manner. The sequence is that of Elongation factor 4 from Listeria innocua serovar 6a (strain ATCC BAA-680 / CLIP 11262).